The primary structure comprises 433 residues: 3-phosphoshikimate 1-carboxyvinyltransferase (433 aa).

Residues Lys15, Ser16, and Arg20 each coordinate 3-phosphoshikimate. Lys15 is a binding site for phosphoenolpyruvate. Residues Gly96 and Arg124 each coordinate phosphoenolpyruvate. Residues Ser169, Gln171, Asp318, and Lys345 each contribute to the 3-phosphoshikimate site. A phosphoenolpyruvate-binding site is contributed by Gln171. Asp318 acts as the Proton acceptor in catalysis. Arg349 and Arg393 together coordinate phosphoenolpyruvate.

This sequence belongs to the EPSP synthase family. In terms of assembly, monomer.

Its subcellular location is the cytoplasm. The catalysed reaction is 3-phosphoshikimate + phosphoenolpyruvate = 5-O-(1-carboxyvinyl)-3-phosphoshikimate + phosphate. Its pathway is metabolic intermediate biosynthesis; chorismate biosynthesis; chorismate from D-erythrose 4-phosphate and phosphoenolpyruvate: step 6/7. In terms of biological role, catalyzes the transfer of the enolpyruvyl moiety of phosphoenolpyruvate (PEP) to the 5-hydroxyl of shikimate-3-phosphate (S3P) to produce enolpyruvyl shikimate-3-phosphate and inorganic phosphate. This is 3-phosphoshikimate 1-carboxyvinyltransferase from Chlorobium phaeovibrioides (strain DSM 265 / 1930) (Prosthecochloris vibrioformis (strain DSM 265)).